The following is a 603-amino-acid chain: Probable methyltransferase PMT4 (603 aa).

Topologically, residues 1–12 (MKVASVIGLRPR) are cytoplasmic. The helical; Signal-anchor for type II membrane protein transmembrane segment at 13-33 (ISGLLFLTLGVIALITILVPN) threads the bilayer. The Lumenal portion of the chain corresponds to 34–603 (SDSSSTTSTT…LVCQKPLLKK (570 aa)). Residues Asn-96 and Asn-393 are each glycosylated (N-linked (GlcNAc...) asparagine).

The protein belongs to the methyltransferase superfamily.

It localises to the endoplasmic reticulum membrane. This is Probable methyltransferase PMT4 from Arabidopsis thaliana (Mouse-ear cress).